Here is a 373-residue protein sequence, read N- to C-terminus: Leucine-, isoleucine-, valine-, threonine-, and alanine-binding protein (373 aa).

Positions 1–26 (MKKGTQRLSRLFAAMAIAGFASYSMA) are cleaved as a signal peptide. Residues Cys80 and Cys105 are joined by a disulfide bond.

Belongs to the leucine-binding protein family.

It is found in the periplasm. Its function is as follows. Component of the high-affinity leucine, isoleucine, valine transport system I (LIV-I), which is operative without Na(+) and is specific for alanine and threonine, in addition to branched-chain amino acids. Binds L-leucine, L-isoleucine, L-valine, L-threonine and L-alanine with nanomolar affinities. Can also bind L-homoserine with high affinity. In Pseudomonas aeruginosa (strain ATCC 15692 / DSM 22644 / CIP 104116 / JCM 14847 / LMG 12228 / 1C / PRS 101 / PAO1), this protein is Leucine-, isoleucine-, valine-, threonine-, and alanine-binding protein (braC).